Here is a 129-residue protein sequence, read N- to C-terminus: Small ribosomal subunit protein uS11 (129 aa).

The protein belongs to the universal ribosomal protein uS11 family. As to quaternary structure, part of the 30S ribosomal subunit. Interacts with proteins S7 and S18. Binds to IF-3.

In terms of biological role, located on the platform of the 30S subunit, it bridges several disparate RNA helices of the 16S rRNA. Forms part of the Shine-Dalgarno cleft in the 70S ribosome. This Methylobacterium sp. (strain 4-46) protein is Small ribosomal subunit protein uS11.